The following is a 329-amino-acid chain: Beta-ketoacyl-[acyl-carrier-protein] synthase III (329 aa).

Active-site residues include Cys-113 and His-255. Positions 256-260 (QANQR) are ACP-binding. Asn-285 is a catalytic residue.

Belongs to the thiolase-like superfamily. FabH family. Homodimer.

It is found in the cytoplasm. It carries out the reaction malonyl-[ACP] + acetyl-CoA + H(+) = 3-oxobutanoyl-[ACP] + CO2 + CoA. Its pathway is lipid metabolism; fatty acid biosynthesis. Functionally, catalyzes the condensation reaction of fatty acid synthesis by the addition to an acyl acceptor of two carbons from malonyl-ACP. Catalyzes the first condensation reaction which initiates fatty acid synthesis and may therefore play a role in governing the total rate of fatty acid production. Possesses both acetoacetyl-ACP synthase and acetyl transacylase activities. Its substrate specificity determines the biosynthesis of branched-chain and/or straight-chain of fatty acids. This is Beta-ketoacyl-[acyl-carrier-protein] synthase III from Chlorobium chlorochromatii (strain CaD3).